A 293-amino-acid polypeptide reads, in one-letter code: Ribosomal protein L11 methyltransferase (293 aa).

Positions 145, 166, 188, and 230 each coordinate S-adenosyl-L-methionine.

It belongs to the methyltransferase superfamily. PrmA family.

The protein localises to the cytoplasm. The enzyme catalyses L-lysyl-[protein] + 3 S-adenosyl-L-methionine = N(6),N(6),N(6)-trimethyl-L-lysyl-[protein] + 3 S-adenosyl-L-homocysteine + 3 H(+). In terms of biological role, methylates ribosomal protein L11. This is Ribosomal protein L11 methyltransferase from Mannheimia succiniciproducens (strain KCTC 0769BP / MBEL55E).